A 380-amino-acid polypeptide reads, in one-letter code: Interleukin-13 receptor subunit alpha-2 (380 aa).

The N-terminal stretch at 1–26 (MAFVCLAIGCLYTFLISTTFGCTSSS) is a signal peptide. Residues 27 to 343 (DTEIKVNPPQ…EDLSKKTLLR (317 aa)) lie on the Extracellular side of the membrane. 3 Fibronectin type-III domains span residues 34–134 (PPQD…SPQG), 139–235 (KVQD…LQNI), and 240–333 (PPVY…CWEG). Cysteines 65 and 113 form a disulfide. A glycan (N-linked (GlcNAc...) asparagine) is linked at Asn-115. 2 disulfides stabilise this stretch: Cys-145–Cys-155 and Cys-184–Cys-197. Asn-215, Asn-290, and Asn-299 each carry an N-linked (GlcNAc...) asparagine glycan. A disulfide bridge links Cys-269 with Cys-316. A WSXWS motif motif is present at residues 322-326 (WSEWS). The helical transmembrane segment at 344–363 (FWLPFGFILILVIFVTGLLL) threads the bilayer. Residues 364 to 380 (RKPNTYPKMIPEFFCDT) are Cytoplasmic-facing.

Belongs to the type I cytokine receptor family. Type 5 subfamily. As to quaternary structure, interacts with IL4RA. Interacts with high affinity to interleukin-13 (IL13), but not to interleukin-4 (IL4). Cleaved by MMP8 leading to a soluble form that is also able to interact with IL13.

Its subcellular location is the cell membrane. In terms of biological role, cell surface receptor that plays a role in the regulation of IL-13-mediated responses. Functions as a decoy receptor that inhibits IL-13- and IL-4-mediated signal transduction via the JAK-STAT pathway and thereby modulates immune responses and inflammation. Serves as a functional signaling receptor for IL-13 in an alternative pathway involving AP-1 ultimately leading to the production of TGFB1. In Homo sapiens (Human), this protein is Interleukin-13 receptor subunit alpha-2 (IL13RA2).